The primary structure comprises 505 residues: Monocarboxylate transporter 6 (505 aa).

The Cytoplasmic segment spans residues 1-17 (MPQALERADGSWAWVVL). A helical membrane pass occupies residues 18-38 (LATMVTQGLTLGFPTCIGIFF). At 39 to 53 (TELQWEFQASNSETS) the chain is on the extracellular side. Residues 54-74 (WFPSILTAVLHMAGPLCSILV) traverse the membrane as a helical segment. Over 75-80 (GRFGCR) the chain is Cytoplasmic. Residues 81–101 (VTVMLGGVLASLGMVASSFSH) form a helical membrane-spanning segment. Over 102–110 (NLSQLYFTA) the chain is Extracellular. The chain crosses the membrane as a helical span at residues 111 to 131 (GFITGLGMCFSFQSSITVLGF). Over 132 to 137 (YFVRRR) the chain is Cytoplasmic. The chain crosses the membrane as a helical span at residues 138 to 158 (VLANALASMGVSLGITLWPLL). Over 159-171 (SRYLLENLGWRGT) the chain is Extracellular. The helical transmembrane segment at 172–192 (FLVFGGIFLHCCICGAIIRPV) threads the bilayer. The Cytoplasmic segment spans residues 193–239 (ATSVAPETKECPPPPPETPALGCLAACGRTIQRHLAFDILRHNTGYC). A helical membrane pass occupies residues 240–260 (VYILGVMWSVLGFPLPQVFLV). The Extracellular portion of the chain corresponds to 261-274 (PYAMWHSVDEQQAA). The helical transmembrane segment at 275 to 295 (LLISIIGFSNIFLRPLAGLMA) threads the bilayer. Residues 296–305 (GRPAFASHRK) are Cytoplasmic-facing. A helical transmembrane segment spans residues 306–326 (YLFSLALLLNGLTNLVCAASG). The Extracellular segment spans residues 327-329 (DFW). A helical membrane pass occupies residues 330–350 (VLVGYCLAYSVSMSGIGALIF). At 351-367 (QVLMDIVPMDQFPRALG) the chain is on the cytoplasmic side. Residues 368–388 (LFTVLDGLAFLISPPLAGLLL) form a helical membrane-spanning segment. The Extracellular portion of the chain corresponds to 389 to 396 (DATNNFSY). The chain crosses the membrane as a helical span at residues 397-417 (VFYMSSFFLISAALFMGGSFY). At 418–505 (ALQKKEQGKQ…QTALGWNSPT (88 aa)) the chain is on the cytoplasmic side. Positions 443–464 (KDGPGKQRSPEIMCQSSRQPRP) are disordered.

The protein belongs to the major facilitator superfamily. Monocarboxylate porter (TC 2.A.1.13) family. As to expression, highly expressed in kidney.

It is found in the cell membrane. In terms of biological role, proton-linked monocarboxylate transporter. Catalyzes the rapid transport across the plasma membrane of many monocarboxylates such as lactate, pyruvate, branched-chain oxo acids derived from leucine, valine and isoleucine, and the ketone bodies acetoacetate, beta-hydroxybutyrate and acetate. The sequence is that of Monocarboxylate transporter 6 (SLC16A5) from Homo sapiens (Human).